The sequence spans 893 residues: Alanine--tRNA ligase (893 aa).

The Zn(2+) site is built by histidine 574, histidine 578, cysteine 678, and histidine 682.

This sequence belongs to the class-II aminoacyl-tRNA synthetase family. Requires Zn(2+) as cofactor.

It localises to the cytoplasm. The catalysed reaction is tRNA(Ala) + L-alanine + ATP = L-alanyl-tRNA(Ala) + AMP + diphosphate. Functionally, catalyzes the attachment of alanine to tRNA(Ala) in a two-step reaction: alanine is first activated by ATP to form Ala-AMP and then transferred to the acceptor end of tRNA(Ala). Also edits incorrectly charged Ser-tRNA(Ala) and Gly-tRNA(Ala) via its editing domain. This is Alanine--tRNA ligase from Bifidobacterium longum (strain NCC 2705).